A 267-amino-acid polypeptide reads, in one-letter code: NAD kinase (267 aa).

The Proton acceptor role is filled by Asp52. NAD(+) is bound by residues 52–53 (DG), Arg57, 121–122 (NE), Arg132, Lys150, Asp152, 163–168 (TAYSLS), and Ala187.

Belongs to the NAD kinase family. The cofactor is a divalent metal cation.

The protein localises to the cytoplasm. The enzyme catalyses NAD(+) + ATP = ADP + NADP(+) + H(+). Functionally, involved in the regulation of the intracellular balance of NAD and NADP, and is a key enzyme in the biosynthesis of NADP. Catalyzes specifically the phosphorylation on 2'-hydroxyl of the adenosine moiety of NAD to yield NADP. The chain is NAD kinase from Fusobacterium nucleatum subsp. nucleatum (strain ATCC 25586 / DSM 15643 / BCRC 10681 / CIP 101130 / JCM 8532 / KCTC 2640 / LMG 13131 / VPI 4355).